A 1798-amino-acid chain; its full sequence is DNA polymerase II large subunit (1798 aa).

Residues 286-309 (EKGKSSEENKDESKAEDTGTESVA) are disordered. A DOD-type homing endonuclease domain is found at 1184 to 1319 (VVGYYLAEGY…ETLLLAKFGI (136 aa)). Residues 1699–1798 (TGHSNGKNGY…GISLDEFFGS (100 aa)) are disordered. Over residues 1714 to 1731 (GKNGKASKKSGSLASKLS) the composition is skewed to low complexity. Basic and acidic residues predominate over residues 1733 to 1753 (KGKEPSKKKESAKPKRSEKVK).

Belongs to the archaeal DNA polymerase II family. In terms of assembly, heterodimer of a large subunit and a small subunit. This protein undergoes a protein self splicing that involves a post-translational excision of the intervening region (intein) followed by peptide ligation.

It catalyses the reaction DNA(n) + a 2'-deoxyribonucleoside 5'-triphosphate = DNA(n+1) + diphosphate. The enzyme catalyses Exonucleolytic cleavage in the 3'- to 5'-direction to yield nucleoside 5'-phosphates.. Functionally, possesses two activities: a DNA synthesis (polymerase) and an exonucleolytic activity that degrades single-stranded DNA in the 3'- to 5'-direction. Has a template-primer preference which is characteristic of a replicative DNA polymerase. In Thermococcus kodakarensis (strain ATCC BAA-918 / JCM 12380 / KOD1) (Pyrococcus kodakaraensis (strain KOD1)), this protein is DNA polymerase II large subunit (polC).